Consider the following 254-residue polypeptide: tRNA (guanine-N(7)-)-methyltransferase (254 aa).

S-adenosyl-L-methionine contacts are provided by glutamate 82, glutamate 107, aspartate 134, and aspartate 157. The active site involves aspartate 157. Residues lysine 161, aspartate 193, and 233–236 each bind substrate; that span reads TKFE.

Belongs to the class I-like SAM-binding methyltransferase superfamily. TrmB family.

It carries out the reaction guanosine(46) in tRNA + S-adenosyl-L-methionine = N(7)-methylguanosine(46) in tRNA + S-adenosyl-L-homocysteine. It functions in the pathway tRNA modification; N(7)-methylguanine-tRNA biosynthesis. In terms of biological role, catalyzes the formation of N(7)-methylguanine at position 46 (m7G46) in tRNA. The polypeptide is tRNA (guanine-N(7)-)-methyltransferase (Corynebacterium jeikeium (strain K411)).